Consider the following 235-residue polypeptide: Probable septum site-determining protein MinC (235 aa).

The segment at 104 to 125 (KAVRPAPVEPATPSEPPQNANP) is disordered. A compositionally biased stretch (pro residues) spans 110-119 (PVEPATPSEP).

This sequence belongs to the MinC family. In terms of assembly, interacts with MinD and FtsZ.

Cell division inhibitor that blocks the formation of polar Z ring septums. Rapidly oscillates between the poles of the cell to destabilize FtsZ filaments that have formed before they mature into polar Z rings. Prevents FtsZ polymerization. The polypeptide is Probable septum site-determining protein MinC (Salmonella agona (strain SL483)).